The primary structure comprises 735 residues: Alpha-adducin (735 aa).

The residue at position 1 (methionine 1) is an N-acetylmethionine. Residues 1–11 show a composition bias toward low complexity; sequence MNGDTRAAVVT. Residues 1 to 21 form a disordered region; sequence MNGDTRAAVVTSPPPTTAPHK. Phosphoserine is present on residues serine 12, serine 59, and serine 64. A Phosphothreonine modification is found at threonine 331. Phosphoserine occurs at positions 334, 353, and 355. The residue at position 358 (threonine 358) is a Phosphothreonine. Residues serine 364, serine 366, serine 408, and serine 427 each carry the phosphoserine modification. Disordered regions lie at residues 418 to 487 and 576 to 735; these read GHSF…AVPN and RREV…KSDS. A Phosphothreonine modification is found at threonine 429. Serine 431 and serine 436 each carry phosphoserine. Positions 440–455 are enriched in basic and acidic residues; that stretch reads QQREKTRWLHSGRGDD. Threonine 445 carries the phosphothreonine; by ROCK2 modification. Serine 464 and serine 465 each carry phosphoserine. The residue at position 480 (threonine 480) is a Phosphothreonine; by ROCK2. Serine 481 is subject to Phosphoserine; by PKA. Positions 576-601 are enriched in basic and acidic residues; sequence RREVERKQKGSEENLDETREQKEKSP. Residues serine 586, serine 600, and serine 605 each carry the phosphoserine modification. Threonine 610 is modified (phosphothreonine). A Phosphoserine modification is found at serine 613. The residue at position 614 (threonine 614) is a Phosphothreonine. Low complexity predominate over residues 698-712; that stretch reads GSPMDPGSDGSPGKS. Residues serine 705, serine 708, and serine 712 each carry the phosphoserine modification. A compositionally biased stretch (basic residues) spans 713–735; sequence PSKKKKKFRTPSFLKKSKKKSDS. Phosphoserine; by PKC is present on serine 714. The segment at 715 to 732 is interaction with calmodulin; it reads KKKKKFRTPSFLKKSKKK. Serine 724 carries the phosphoserine; by PKA and PKC modification.

Belongs to the aldolase class II family. Adducin subfamily. As to quaternary structure, heterodimer of an alpha and a beta subunit or an alpha and a gamma subunit.

The protein resides in the cytoplasm. The protein localises to the cytoskeleton. Its subcellular location is the cell membrane. In terms of biological role, membrane-cytoskeleton-associated protein that promotes the assembly of the spectrin-actin network. Binds to calmodulin. This chain is Alpha-adducin (Add1), found in Mus musculus (Mouse).